The chain runs to 428 residues: 3-phosphoshikimate 1-carboxyvinyltransferase (428 aa).

The 3-phosphoshikimate site is built by Lys22, Ser23, and Arg27. Lys22 provides a ligand contact to phosphoenolpyruvate. Gly96 and Arg124 together coordinate phosphoenolpyruvate. 3-phosphoshikimate is bound by residues Ser169, Ser170, Gln171, Ser197, Asp313, Asn336, and Lys340. Gln171 is a binding site for phosphoenolpyruvate. The Proton acceptor role is filled by Asp313. Arg344, Arg386, and Lys411 together coordinate phosphoenolpyruvate.

This sequence belongs to the EPSP synthase family. In terms of assembly, monomer.

It is found in the cytoplasm. The catalysed reaction is 3-phosphoshikimate + phosphoenolpyruvate = 5-O-(1-carboxyvinyl)-3-phosphoshikimate + phosphate. It functions in the pathway metabolic intermediate biosynthesis; chorismate biosynthesis; chorismate from D-erythrose 4-phosphate and phosphoenolpyruvate: step 6/7. Functionally, catalyzes the transfer of the enolpyruvyl moiety of phosphoenolpyruvate (PEP) to the 5-hydroxyl of shikimate-3-phosphate (S3P) to produce enolpyruvyl shikimate-3-phosphate and inorganic phosphate. The chain is 3-phosphoshikimate 1-carboxyvinyltransferase from Photorhabdus laumondii subsp. laumondii (strain DSM 15139 / CIP 105565 / TT01) (Photorhabdus luminescens subsp. laumondii).